The sequence spans 525 residues: Glutamate--cysteine ligase (525 aa).

The protein belongs to the glutamate--cysteine ligase type 1 family. Type 1 subfamily.

It carries out the reaction L-cysteine + L-glutamate + ATP = gamma-L-glutamyl-L-cysteine + ADP + phosphate + H(+). It participates in sulfur metabolism; glutathione biosynthesis; glutathione from L-cysteine and L-glutamate: step 1/2. The chain is Glutamate--cysteine ligase from Hahella chejuensis (strain KCTC 2396).